The chain runs to 163 residues: Phosphopantetheine adenylyltransferase (163 aa).

Thr10 is a substrate binding site. Residues 10–11 (TF) and His18 each bind ATP. Residues Lys42, Leu74, and Arg88 each coordinate substrate. ATP contacts are provided by residues 89–91 (GLR), Glu99, and 124–130 (NSFISST).

The protein belongs to the bacterial CoaD family. In terms of assembly, homohexamer. Requires Mg(2+) as cofactor.

It localises to the cytoplasm. It catalyses the reaction (R)-4'-phosphopantetheine + ATP + H(+) = 3'-dephospho-CoA + diphosphate. Its pathway is cofactor biosynthesis; coenzyme A biosynthesis; CoA from (R)-pantothenate: step 4/5. In terms of biological role, reversibly transfers an adenylyl group from ATP to 4'-phosphopantetheine, yielding dephospho-CoA (dPCoA) and pyrophosphate. This chain is Phosphopantetheine adenylyltransferase, found in Shewanella oneidensis (strain ATCC 700550 / JCM 31522 / CIP 106686 / LMG 19005 / NCIMB 14063 / MR-1).